Consider the following 310-residue polypeptide: tRNA-cytidine(32) 2-sulfurtransferase (310 aa).

Residues 58-63 (SGGKDS) carry the PP-loop motif motif. Residues Cys133, Cys136, and Cys224 each coordinate [4Fe-4S] cluster.

This sequence belongs to the TtcA family. Homodimer. Mg(2+) serves as cofactor. Requires [4Fe-4S] cluster as cofactor.

Its subcellular location is the cytoplasm. The catalysed reaction is cytidine(32) in tRNA + S-sulfanyl-L-cysteinyl-[cysteine desulfurase] + AH2 + ATP = 2-thiocytidine(32) in tRNA + L-cysteinyl-[cysteine desulfurase] + A + AMP + diphosphate + H(+). Its pathway is tRNA modification. In terms of biological role, catalyzes the ATP-dependent 2-thiolation of cytidine in position 32 of tRNA, to form 2-thiocytidine (s(2)C32). The sulfur atoms are provided by the cysteine/cysteine desulfurase (IscS) system. The chain is tRNA-cytidine(32) 2-sulfurtransferase from Paracidovorax citrulli (strain AAC00-1) (Acidovorax citrulli).